The primary structure comprises 238 residues: Ribosomal RNA large subunit methyltransferase E (238 aa).

Residues G76, W78, D99, D115, and D139 each coordinate S-adenosyl-L-methionine. The active-site Proton acceptor is the K179.

It belongs to the class I-like SAM-binding methyltransferase superfamily. RNA methyltransferase RlmE family.

Its subcellular location is the cytoplasm. It catalyses the reaction uridine(2552) in 23S rRNA + S-adenosyl-L-methionine = 2'-O-methyluridine(2552) in 23S rRNA + S-adenosyl-L-homocysteine + H(+). Specifically methylates the uridine in position 2552 of 23S rRNA at the 2'-O position of the ribose in the fully assembled 50S ribosomal subunit. This chain is Ribosomal RNA large subunit methyltransferase E, found in Rhodopseudomonas palustris (strain BisB18).